The following is a 61-amino-acid chain: Photosystem II reaction center protein K (61 aa).

Positions Met1–Ala24 are excised as a propeptide. The helical transmembrane segment at Met40–Phe60 threads the bilayer.

This sequence belongs to the PsbK family. In terms of assembly, PSII is composed of 1 copy each of membrane proteins PsbA, PsbB, PsbC, PsbD, PsbE, PsbF, PsbH, PsbI, PsbJ, PsbK, PsbL, PsbM, PsbT, PsbX, PsbY, PsbZ, Psb30/Ycf12, at least 3 peripheral proteins of the oxygen-evolving complex and a large number of cofactors. It forms dimeric complexes.

It localises to the plastid. The protein localises to the chloroplast thylakoid membrane. In terms of biological role, one of the components of the core complex of photosystem II (PSII). PSII is a light-driven water:plastoquinone oxidoreductase that uses light energy to abstract electrons from H(2)O, generating O(2) and a proton gradient subsequently used for ATP formation. It consists of a core antenna complex that captures photons, and an electron transfer chain that converts photonic excitation into a charge separation. This is Photosystem II reaction center protein K from Panax ginseng (Korean ginseng).